We begin with the raw amino-acid sequence, 406 residues long: MPSPRREDGDALRCGDRSAAVTEIRAALTALGMLDHQEEDLTTGRNVALELFDAQLDQAVRAFQQHRGLLVDGIVGEATYRALKEASYRLGARTLYHQFGAPLYGDDVATLQARLQDLGFYTGLVDGHFGLQTHNALMSYQREYGLAADGICGPETLRSLYFLSSRVSGGSPHAIREEELVRSSGPKLSGKRIIIDPGRGGVDHGLIAQGPAGPISEADLLWDLASRLEGRMAAIGMETHLSRPTNRSPSDAERAATANAVGADLMISLRCETQTSLAANGVASFHFGNSHGSVSTIGRNLADFIQREVVARTGLRDCRVHGRTWDLLRLTRMPTVQVDIGYITNPHDRGMLVSTQTRDAIAEGILAAVKRLYLLGKNDRPTGTFTFAELLAHELSVERAGRLGGS.

2 peptidoglycan-binding domain regions span residues 18-83 (SAAV…YRAL) and 105-160 (GDDV…LRSL). The MurNAc-LAA domain maps to 193 to 370 (IIIDPGRGGV…IAEGILAAVK (178 aa)).

Belongs to the N-acetylmuramoyl-L-alanine amidase 3 family.

The protein resides in the periplasm. The catalysed reaction is Hydrolyzes the link between N-acetylmuramoyl residues and L-amino acid residues in certain cell-wall glycopeptides.. The protein operates within cell wall degradation; peptidoglycan degradation. Cell-wall hydrolase that hydrolyzes the amide bond between N-acetylmuramic acid and L-alanine in cell-wall glycopeptides. Is able to lyse whole mycobacteria, release peptidoglycan from the cell wall of M.luteus and M.smegmatis, and cleave N-acetylmuramoyl-L-alanyl-D-isoglutamine, releasing free N-acetylmuramic acid and dipeptide. This is N-acetylmuramoyl-L-alanine amidase CwlM from Mycobacterium tuberculosis (strain ATCC 25618 / H37Rv).